A 207-amino-acid polypeptide reads, in one-letter code: Ribosomal RNA small subunit methyltransferase G (207 aa).

Residues glycine 73, leucine 78, 124–125 (VE), and arginine 139 each bind S-adenosyl-L-methionine.

The protein belongs to the methyltransferase superfamily. RNA methyltransferase RsmG family.

It is found in the cytoplasm. The enzyme catalyses guanosine(527) in 16S rRNA + S-adenosyl-L-methionine = N(7)-methylguanosine(527) in 16S rRNA + S-adenosyl-L-homocysteine. In terms of biological role, specifically methylates the N7 position of guanine in position 527 of 16S rRNA. This is Ribosomal RNA small subunit methyltransferase G from Klebsiella pneumoniae subsp. pneumoniae (strain ATCC 700721 / MGH 78578).